Reading from the N-terminus, the 421-residue chain is NADH-quinone oxidoreductase subunit F 2 (421 aa).

53–62 (GRGGAGFPTG) contributes to the NAD(+) binding site. Residue 165–212 (GAGAYICGEETAMLESLEGKRAQPRLKPPFPAVAGLYASPTVINNVET) participates in FMN binding. Residues Cys342, Cys345, Cys348, and Cys388 each coordinate [4Fe-4S] cluster.

It belongs to the complex I 51 kDa subunit family. FMN is required as a cofactor. It depends on [4Fe-4S] cluster as a cofactor.

It carries out the reaction a quinone + NADH + 5 H(+)(in) = a quinol + NAD(+) + 4 H(+)(out). Functionally, NDH-1 shuttles electrons from NADH, via FMN and iron-sulfur (Fe-S) centers, to quinones in the respiratory chain. The immediate electron acceptor for the enzyme in this species is believed to be ubiquinone. Couples the redox reaction to proton translocation (for every two electrons transferred, four hydrogen ions are translocated across the cytoplasmic membrane), and thus conserves the redox energy in a proton gradient. This Rhizobium meliloti (strain 1021) (Ensifer meliloti) protein is NADH-quinone oxidoreductase subunit F 2 (nuoF2).